Reading from the N-terminus, the 412-residue chain is Palmitoyltransferase ZDHHC6 (412 aa).

Over 1 to 24 the chain is Cytoplasmic; the sequence is MNILSAIIVFENLHEVKRLFHWGP. A helical membrane pass occupies residues 25 to 45; that stretch reads IIALTVIGVCSSMAILDSIIW. Topologically, residues 46–57 are lumenal; it reads YWPLDTTGGSIN. A helical membrane pass occupies residues 58–78; that stretch reads FIMLINWTVLILYNYFNAMFV. Residues 79–143 are Cytoplasmic-facing; that stretch reads GPGYIPLEWK…NCCGHLNHAY (65 aa). A DHHC domain is found at 99–149; it reads QFCRLCQGYKAPRSHHCRKCNRCVMKMDHHCPWINNCCGHLNHAYFTSFLL. Residue cysteine 129 is the S-palmitoyl cysteine intermediate of the active site. Residues 144–164 form a helical membrane-spanning segment; the sequence is FTSFLLLAPLGCIHAALIFIM. Residues 165-205 lie on the Lumenal side of the membrane; sequence TMYTQLYDRISFGWSSVKIDMSAARHIHHPIMPFSIAAFAA. The helical transmembrane segment at 206-226 threads the bilayer; that stretch reads TLFALGLALGTTIAVGMLFFI. The Cytoplasmic portion of the chain corresponds to 227-412; the sequence is QMKVILRNRT…NSTSEEKKEQ (186 aa). One can recognise an SH3 domain in the interval 313-398; sequence QRSVEYRVVE…PRRCVEKCLY (86 aa). Residues cysteine 328, cysteine 329, and cysteine 343 are each lipidated (S-palmitoyl cysteine). The Di-lysine motif signature appears at 409–412; it reads KKEQ.

Belongs to the DHHC palmitoyltransferase family.

The protein localises to the endoplasmic reticulum membrane. The catalysed reaction is L-cysteinyl-[protein] + hexadecanoyl-CoA = S-hexadecanoyl-L-cysteinyl-[protein] + CoA. It carries out the reaction L-cysteinyl-[protein] + octadecanoyl-CoA = S-octadecanoyl-L-cysteinyl-[protein] + CoA. Functionally, endoplasmic reticulum palmitoyl acyltransferase that probably catalyzes the addition of palmitate onto various protein substrates and is involved in a variety of cellular processes. Could also function as a stearoyltransferase. The protein is Palmitoyltransferase ZDHHC6 of Danio rerio (Zebrafish).